A 1047-amino-acid chain; its full sequence is Atrial natriuretic peptide receptor 2 (1047 aa).

An N-terminal signal peptide occupies residues 1 to 16 (MALPSLLLVVAALAGG). Residues 17-458 (VRPPGARNLT…DKTPLSTLAI (442 aa)) lie on the Extracellular side of the membrane. N24 and N35 each carry an N-linked (GlcNAc...) asparagine glycan. The cysteines at positions 75 and 101 are disulfide-linked. N-linked (GlcNAc...) asparagine glycans are attached at residues N161, N195, N244, N277, and N349. A helical membrane pass occupies residues 459–478 (VALGTGVTFIMFGVSSFLIF). Topologically, residues 479-1047 (RKLMLEKELA…GEQKGPPGLL (569 aa)) are cytoplasmic. S513 carries the phosphoserine modification. The Protein kinase domain occupies 513-786 (SRLTLSLRGS…PDFGQIKGFI (274 aa)). T516 carries the post-translational modification Phosphothreonine. Residues S518, S522, S523, and S526 each carry the phosphoserine modification. Residue T529 is modified to Phosphothreonine. The Guanylate cyclase domain maps to 861 to 991 (TIYFSDIVGF…DTVNTASRME (131 aa)).

The protein belongs to the adenylyl cyclase class-4/guanylyl cyclase family. Post-translationally, phosphorylated. Phosphorylation of the protein kinase-like domain is required for full activation by CNP. In terms of processing, glycosylated. Widely expressed. Expressed in the columnar proliferating and prehypertrophic chondrocyte layers of the tibia.

Its subcellular location is the cell membrane. The catalysed reaction is GTP = 3',5'-cyclic GMP + diphosphate. Functionally, receptor for the C-type natriuretic peptide NPPC/CNP hormone. Has guanylate cyclase activity upon binding of its ligand. May play a role in the regulation of skeletal growth. The polypeptide is Atrial natriuretic peptide receptor 2 (Npr2) (Mus musculus (Mouse)).